A 725-amino-acid polypeptide reads, in one-letter code: Catalase-peroxidase (725 aa).

The tract at residues 1 to 20 is disordered; the sequence is MSSEAKCPFPHAANRSRSNQ. The segment at residues 91–215 is a cross-link (tryptophyl-tyrosyl-methioninium (Trp-Tyr) (with M-241)); that stretch reads WHATGTYRTM…LSATHMGLIY (125 aa). H92 functions as the Proton acceptor in the catalytic mechanism. The tryptophyl-tyrosyl-methioninium (Tyr-Met) (with W-91) cross-link spans 215–241; sequence YVNPEGPDGSGDYMAAAKDIRATFYRM. H256 lines the heme b pocket.

Belongs to the peroxidase family. Peroxidase/catalase subfamily. Homodimer or homotetramer. Heme b serves as cofactor. In terms of processing, formation of the three residue Trp-Tyr-Met cross-link is important for the catalase, but not the peroxidase activity of the enzyme.

It catalyses the reaction H2O2 + AH2 = A + 2 H2O. The enzyme catalyses 2 H2O2 = O2 + 2 H2O. Bifunctional enzyme with both catalase and broad-spectrum peroxidase activity. This chain is Catalase-peroxidase, found in Janthinobacterium sp. (strain Marseille) (Minibacterium massiliensis).